Consider the following 372-residue polypeptide: E3 ubiquitin-protein ligase RNF34 (372 aa).

The segment at 56–107 (EGPNIVCKACGLSFSVFRKKHVCCDCKKDFCSVCSVLQENLRRCSTCHLLQE) adopts an FYVE-type zinc-finger fold. An SAP 1 domain is found at 115-134 (LMRLKVKDLRQYLILRNIPT). Ser169 carries the post-translational modification Phosphoserine. Residues 194-252 (QGELMDGDQTSRSGVPAQVQSEITSANTEDDDDDDDEDDDDEEENAEDQNPGLSKERVR) form a disordered region. Polar residues predominate over residues 201-220 (DQTSRSGVPAQVQSEITSAN). Positions 221 to 240 (TEDDDDDDDEDDDDEEENAE) are enriched in acidic residues. Ser254 and Ser256 each carry phosphoserine. The 15-residue stretch at 264–278 (VEGMSVRQLKEILAR) folds into the SAP 2 domain. The RING-type zinc-finger motif lies at 325–360 (CRICMDAVIDCVLLECGHMVTCTKCGKRMSECPICR).

Interacts with CASP8 and CASP10. Interacts with p53/TP53; involved in p53/TP53 ubiquitination. Interacts (via RING-type zinc finger) with MDM2; the interaction stabilizes MDM2. Interacts (via RING-type zinc finger) with PPARGC1A. Interacts with NOD1. In terms of processing, autoubiquitinated (in vitro). Proteolytically cleaved by caspases upon induction of apoptosis by TNF.

Its subcellular location is the cell membrane. It is found in the endomembrane system. The protein localises to the nucleus. It localises to the nucleus speckle. The protein resides in the cytoplasm. Its subcellular location is the cytosol. The enzyme catalyses S-ubiquitinyl-[E2 ubiquitin-conjugating enzyme]-L-cysteine + [acceptor protein]-L-lysine = [E2 ubiquitin-conjugating enzyme]-L-cysteine + N(6)-ubiquitinyl-[acceptor protein]-L-lysine.. It participates in protein modification; protein ubiquitination. Its function is as follows. E3 ubiquitin-protein ligase that regulates several biological processes through the ubiquitin-mediated proteasomal degradation of various target proteins. Ubiquitinates the caspases CASP8 and CASP10, promoting their proteasomal degradation, to negatively regulate cell death downstream of death domain receptors in the extrinsic pathway of apoptosis. May mediate 'Lys-48'-linked polyubiquitination of RIPK1 and its subsequent proteasomal degradation thereby indirectly regulating the tumor necrosis factor-mediated signaling pathway. Negatively regulates p53/TP53 through its direct ubiquitination and targeting to proteasomal degradation. Indirectly, may also negatively regulate p53/TP53 through ubiquitination and degradation of SFN. Mediates PPARGC1A proteasomal degradation probably through ubiquitination thereby indirectly regulating the metabolism of brown fat cells. Possibly involved in innate immunity, through 'Lys-48'-linked polyubiquitination of NOD1 and its subsequent proteasomal degradation. The chain is E3 ubiquitin-protein ligase RNF34 (RNF34) from Pongo abelii (Sumatran orangutan).